Consider the following 276-residue polypeptide: Casein kinase II subunit beta-3 (276 aa).

Disordered regions lie at residues 1 to 22 (MYKE…LGGA) and 34 to 86 (KKLE…SEGD).

The protein belongs to the casein kinase 2 subunit beta family. As to quaternary structure, heterotetramer of two catalytic alpha subunits and two regulatory beta subunits. Interacts with CCA1. Interacts with LHY. Phosphorylated by alpha subunit.

Its subcellular location is the cytoplasm. The protein localises to the cytosol. It is found in the nucleus. Plays a complex role in regulating the basal catalytic activity of the alpha subunit. The tetrameric holoenzyme CK2, composed of two alpha and two beta subunits, phosphorylates the transcription factor PIF1 after an exposure to light, resulting in a proteasome-dependent degradation of PIF1 and promotion of photomorphogenesis. CK2 phosphorylates translation initiation factors. May participate in the regulation of the initiation of translation. Stimulates the binding of CCA1 to promoters. The protein is Casein kinase II subunit beta-3 (CKB3) of Arabidopsis thaliana (Mouse-ear cress).